Consider the following 212-residue polypeptide: Large ribosomal subunit protein uL1 (212 aa).

The protein belongs to the universal ribosomal protein uL1 family. As to quaternary structure, part of the 50S ribosomal subunit.

Binds directly to 23S rRNA. Probably involved in E site tRNA release. In terms of biological role, protein L1 is also a translational repressor protein, it controls the translation of its operon by binding to its mRNA. This chain is Large ribosomal subunit protein uL1, found in Haloferax volcanii (strain ATCC 29605 / DSM 3757 / JCM 8879 / NBRC 14742 / NCIMB 2012 / VKM B-1768 / DS2) (Halobacterium volcanii).